Here is a 437-residue protein sequence, read N- to C-terminus: MASPSSFTYCCPPSSSPIWSEPLYSLRPEHARERLQDDSVETVTSIEQAKVEEKIQEVFSSYKFNHLVPRLVLQREKHFHYLKRGLRQLTDAYECLDASRPWLCYWILHSLELLDEPIPQMVATDVCQFLELCQSPEGGFGGGPGQYPHLAPTYAAVNALCIIGTEEAYDVINREKLLQYLYSLKQPDGSFLMHDGGEVDVRSAYCAASVASLTNIITPDLFEGTAEWIARCQNWEGGIGGVPGMEAHGGYTFCGLAALVILKKERSLNLKSLLQWVTSRQMRFEGGFQGRCNKLVDGCYSFWQAGLLPLLHRALHAQGDPALSMSRWMFHQQALQEYILMCCQCPTGGLLDKPGKSRDFYHTCYCLSGLSIAQHFGSGAMLHDVVLGVPENALQPTHPVYNIGPDKVIQATMHFLQKPVPGFEEHEDEASAEPATD.

5 PFTB repeats span residues 123-164 (ATDV…CIIG), 174-215 (REKL…SLTN), 222-263 (FEGT…VILK), 270-312 (LKSL…PLLH), and 332-374 (QQAL…SIAQ). (2E,6E)-farnesyl diphosphate is bound by residues 248–251 (HGGY) and 291–294 (RCNK). Zn(2+)-binding residues include Asp297 and Cys299. 300-303 (YSFW) is a (2E,6E)-farnesyl diphosphate binding site. His362 contacts Zn(2+). Thr436 bears the Phosphothreonine mark.

This sequence belongs to the protein prenyltransferase subunit beta family. As to quaternary structure, heterodimer of FNTA and FNTB. It depends on Zn(2+) as a cofactor.

It catalyses the reaction L-cysteinyl-[protein] + (2E,6E)-farnesyl diphosphate = S-(2E,6E)-farnesyl-L-cysteinyl-[protein] + diphosphate. In terms of biological role, essential subunit of the farnesyltransferase complex. Catalyzes the transfer of a farnesyl moiety from farnesyl diphosphate to a cysteine at the fourth position from the C-terminus of several proteins having the C-terminal sequence Cys-aliphatic-aliphatic-X. This chain is Protein farnesyltransferase subunit beta (FNTB), found in Bos taurus (Bovine).